Here is a 1133-residue protein sequence, read N- to C-terminus: MDVLAEEFGNLTPEQLAAPIPTVEEKWRLLPAFLKVKGLVKQHIDSFNYFINVEIKKIMKANEKVTSDADPMWYLKYLNIYVGLPDVEESFNVTRPVSPHECRLRDMTYSAPITVDIEYTRGSQRIIRNALPIGRMPIMLRSSNCVLTGKTPAEFAKLNECPLDPGGYFIVKGVEKVILIQEQLSKNRIIVEADRKGAVGASVTSSTHEKKSRTNMAVKQGRFYLRHNTLSEDIPIVIIFKAMGVESDQEIVQMIGTEEHVMAAFGPSLEECQKAQIFTQMQALKYIGNKVRRQRMWGGGPKKTKIEEARELLASTILTHVPVKEFNFRAKCIYTAVMVRRVILAQGDNKVDDRDYYGNKRLELAGQLLSLLFEDLFKKFNSEMKKIADQVIPKQRAAQFDVVKHMRQDQITNGMVNAISTGNWSLKRFKMDRQGVTQVLSRLSYISALGMMTRISSQFEKTRKVSGPRSLQPSQWGMLCPSDTPEGEACGLVKNLALMTHITTDMEDGPIVKLASNLGVEDVNLLCGEELSYPNVFLVFLNGNILGVIRDHKKLVNTFRLMRRAGYINEFVSISTNLTDRCVYISSDGGRLCRPYIIVKKQKPAVTNKHMEELAQGYRNFEDFLHESLVEYLDVNEENDCNIALYEHTINKDTTHLEIEPFTLLGVCAGLIPYPHHNQSPRNTYQCAMGKQAMGTIGYNQRNRIDTLMYLLAYPQKPMVKTKTIELIEFEKLPAGQNATVAVMSYSGYDIEDALVLNKASLDRGFGRCLVYKNAKCTLKRYTNQTFDKVMGPMLDAATRKPIWRHEILDADGICSPGEKVENKQVLVNKSMPTVTQIPLEGSNVPQQPQYKDVPITYKGATDSYIEKVMISSNAEDAFLIKMLLRQTRRPEIGDKFSSRHGQKGVCGLIVPQEDMPFCDSGICPDIIMNPHGFPSRMTVGKLIELLAGKAGVLDGRFHYGTAFGGSKVKDVCEDLVRHGYNYLGKDYVTSGITGEPLEAYIYFGPVYYQKLKHMVLDKMHARARGPRAVLTRQPTEGRSRDGGLRLGEMERDCLIGYGASMLLLERLMISSDAFEVDVCGQCGLLGYSGWCHYCKSSCHVSSLRIPYACKLLFQELQSMNIIPRLKLSKYNE.

K186 serves as a coordination point for RNA. DNA is bound at residue R195. R213 contacts RNA. D432 provides a ligand contact to DNA. RNA contacts are provided by Q438 and Q692. D753 is a binding site for Mg(2+). Positions 896, 904, and 1019 each coordinate RNA. R1039, S1040, and R1046 together coordinate DNA. The Zn(2+) site is built by C1080, C1083, C1092, and C1095. The segment at 1080–1095 (CGQCGLLGYSGWCHYC) adopts a C4-type zinc-finger fold.

It belongs to the RNA polymerase beta chain family. As to quaternary structure, component of the RNA polymerase III (Pol III) complex consisting of 17 subunits: a ten-subunit catalytic core composed of POLR3A/RPC1, POLR3B/RPC2, POLR1C/RPAC1, POLR1D/RPAC2, POLR3K/RPC10, POLR2E/RPABC1, POLR2F/RPABC2, POLR2H/RPABC3, POLR2K/RPABC4 and POLR2L/RPABC5; a mobile stalk composed of two subunits POLR3H/RPC8 and CRCP/RPC9, protruding from the core and functioning primarily in transcription initiation; and additional subunits homologous to general transcription factors of the RNA polymerase II machinery, POLR3C/RPC3-POLR3F/RPC6-POLR3G/RPC7 heterotrimer required for transcription initiation and POLR3D/RPC4-POLR3E/RPC5 heterodimer involved in both transcription initiation and termination. Mg(2+) serves as cofactor.

The protein resides in the nucleus. Its subcellular location is the cytoplasm. The protein localises to the cytosol. The enzyme catalyses RNA(n) + a ribonucleoside 5'-triphosphate = RNA(n+1) + diphosphate. Catalytic core component of RNA polymerase III (Pol III), a DNA-dependent RNA polymerase which synthesizes small non-coding RNAs using the four ribonucleoside triphosphates as substrates. Synthesizes 5S rRNA, snRNAs, tRNAs and miRNAs from at least 500 distinct genomic loci. Pol III-mediated transcription cycle proceeds through transcription initiation, transcription elongation and transcription termination stages. During transcription initiation, Pol III is recruited to DNA promoters type I, II or III with the help of general transcription factors and other specific initiation factors. Once the polymerase has escaped from the promoter it enters the elongation phase during which RNA is actively polymerized, based on complementarity with the template DNA strand. Transcription termination involves the release of the RNA transcript and polymerase from the DNA. Forms Pol III active center together with the largest subunit POLR3A/RPC1. A single-stranded DNA template strand of the promoter is positioned within the central active site cleft of Pol III. Appends one nucleotide at a time to the 3' end of the nascent RNA, with POLR3A/RPC1 contributing a Mg(2+)-coordinating DxDGD motif, and POLR3B/RPC2 participating in the coordination of a second Mg(2+) ion and providing lysine residues believed to facilitate Watson-Crick base pairing between the incoming nucleotide and template base. Typically, Mg(2+) ions direct a 5' nucleoside triphosphate to form a phosphodiester bond with the 3' hydroxyl of the preceding nucleotide of the nascent RNA, with the elimination of pyrophosphate. Pol III plays a key role in sensing and limiting infection by intracellular bacteria and DNA viruses. Acts as a nuclear and cytosolic DNA sensor involved in innate immune response. Can sense non-self dsDNA that serves as template for transcription into dsRNA. The non-self RNA polymerase III transcripts, such as Epstein-Barr virus-encoded RNAs (EBERs) induce type I interferon and NF-kappa-B through the RIG-I pathway. In Homo sapiens (Human), this protein is DNA-directed RNA polymerase III subunit RPC2.